Here is a 367-residue protein sequence, read N- to C-terminus: MSFDSVPRHALSMRFDLEPPSHASAAHRVAVLLVNLGTPDAPTPRAVRRYLAQFLSDPRVVEIPQLVWQVILRTLILPLRGRASAKKYAAVWLPEGSPLRVYTERQVESVKPLFAANGYRVIVDYAMRYGTPSIADVLAQLKRAGAERVLLLPMYPQYSSSTTATAFDAAFAALGRMRNQPEVRTVRHYADHPAYIHALAEQVRQYWAAHGRPAFDAGDKLVLSFHGVPKRTLDLGDPYHDQCQQTAALLMSALGLTTFECRVTFQSRFGKAEWLQPYTAPTLKELGAAGVRRADVFCPGFTADCLETIEEIGIEVRDEFVHGGGKEFHRIPCLNASPAWIAALGEIAAENLQGWPVRVAMAPEAVS.

Fe cation-binding residues include H226 and E307.

Belongs to the ferrochelatase family.

The protein resides in the cytoplasm. It carries out the reaction heme b + 2 H(+) = protoporphyrin IX + Fe(2+). Its pathway is porphyrin-containing compound metabolism; protoheme biosynthesis; protoheme from protoporphyrin-IX: step 1/1. Catalyzes the ferrous insertion into protoporphyrin IX. This chain is Ferrochelatase, found in Burkholderia pseudomallei (strain 1106a).